Consider the following 518-residue polypeptide: Fusicoccin H C-9 hydroxylase (518 aa).

The helical transmembrane segment at 12–29 (HLLLISTVIAVLAALIVS) threads the bilayer. Residues asparagine 81 and asparagine 168 are each glycosylated (N-linked (GlcNAc...) asparagine). Cysteine 456 contributes to the heme binding site.

It belongs to the cytochrome P450 family. Heme serves as cofactor.

The protein resides in the membrane. The protein operates within mycotoxin biosynthesis. Functionally, cytochrome P450 monooxygenase; part of the 2 gene clusters that mediate the biosynthesis of fusicoccins, diterpene glucosides that display phytohormone-like activity and function as potent activators of plasma membrane H(+)-ATPases in plants by modifying 14-3-3 proteins and cause the plant disease constriction canker. The first step in the pathway is performed by the fusicoccadiene synthase PaFS that possesses both prenyl transferase and terpene cyclase activity, converting isopentenyl diphosphate and dimethylallyl diphosphate into geranylgeranyl diphosphate (GGDP) and successively converting GGDP into fusicocca-2,10(14)-diene, a precursor for fusicoccin H. The second step is the oxidation at the C-8 position by the cytochrome P450 monooxygenase PaP450-2 to yield fusicocca-2,10(14)-diene-8-beta-ol. The cytochrome P450 monooxygenase PaP450-1 then catalyzes the hydroxylation at the C-16 position to produce fusicocca-2,10(14)-diene-8-beta,16-diol. The dioxygenase fc-dox then catalyzes the 16-oxydation of fusicocca-2,10(14)-diene-8-beta,16-diol to yield an aldehyde (8-beta-hydroxyfusicocca-1,10(14)-dien-16-al). The short-chain dehydrogenase/reductase fc-sdr catalyzes the reduction of the aldehyde to yield fusicocca-1,10(14)-diene-8-beta,16-diol. The next step is the hydroxylation at C-9 performed by the cytochrome P450 monooxygenase PaP450-3 that leads to fusicoccin H aglycon which is glycosylated to fusicoccin H by the O-glycosyltransferase PaGT. Hydroxylation at C-12 by the cytochrome P450 monooxygenase PaP450-4 leads then to the production of fusicoccin Q and is followed by methylation by the O-methyltransferase PaMT to yield fusicoccin P. Fusicoccin P is further converted to fusicoccin J via prenylation by the O-glucose prenyltransferase PaPT. Cytochrome P450 monooxygenase PaP450-5 then performs hydroxylation at C-19 to yield dideacetyl-fusicoccin A which is acetylated to 3'-O-deacetyl-fusicoccin A by the O-acetyltransferase PaAT-2. Finally, a another acetylation by the O-acetyltransferase PaAT-1 yields fusicoccin A. The chain is Fusicoccin H C-9 hydroxylase from Phomopsis amygdali (Fusicoccum amygdali).